Reading from the N-terminus, the 70-residue chain is NAD(P)H-quinone oxidoreductase subunit L (70 aa).

Helical transmembrane passes span 2–22 and 39–59; these read IVALLYLILAGAYLLVIPIAV and LLMYFLVFFFFPGLLVLSPFA.

Belongs to the complex I NdhL subunit family. As to quaternary structure, NDH-1 can be composed of about 15 different subunits; different subcomplexes with different compositions have been identified which probably have different functions.

It localises to the cellular thylakoid membrane. The enzyme catalyses a plastoquinone + NADH + (n+1) H(+)(in) = a plastoquinol + NAD(+) + n H(+)(out). It carries out the reaction a plastoquinone + NADPH + (n+1) H(+)(in) = a plastoquinol + NADP(+) + n H(+)(out). In terms of biological role, NDH-1 shuttles electrons from an unknown electron donor, via FMN and iron-sulfur (Fe-S) centers, to quinones in the respiratory and/or the photosynthetic chain. The immediate electron acceptor for the enzyme in this species is believed to be plastoquinone. Couples the redox reaction to proton translocation, and thus conserves the redox energy in a proton gradient. Cyanobacterial NDH-1 also plays a role in inorganic carbon-concentration. The chain is NAD(P)H-quinone oxidoreductase subunit L from Nostoc punctiforme (strain ATCC 29133 / PCC 73102).